Reading from the N-terminus, the 171-residue chain is UPF0303 protein YPTS_2661 (171 aa).

Belongs to the UPF0303 family.

The polypeptide is UPF0303 protein YPTS_2661 (Yersinia pseudotuberculosis serotype IB (strain PB1/+)).